A 635-amino-acid polypeptide reads, in one-letter code: ATP-binding protein Uup (635 aa).

2 consecutive ABC transporter domains span residues 1-253 (MSLI…RVEE) and 320-546 (FEME…KTEE). Residues 36 to 43 (GRNGAGKS) and 352 to 359 (GPNGCGKT) each bind ATP. The segment at 551-635 (KAETVKRSSS…EYLEALKNGG (85 aa)) is C-terminal domain (CTD), binds DNA, required to complement a deletion mutant. Residues 563-631 (SYKLQRELEQ…FERWEYLEAL (69 aa)) adopt a coiled-coil conformation.

The protein belongs to the ABC transporter superfamily. ABCF family. Uup subfamily.

It is found in the cytoplasm. The catalysed reaction is ATP + H2O = ADP + phosphate + H(+). With respect to regulation, ATPase activity inhibited by N-ethylmaleimide but not by vanadate. Its function is as follows. Probably plays a role in ribosome assembly or function; overexpression suppresses cold-sensitive growth of a bipA deletion. May be involved in resolution of branched DNA intermediates that result from template switching in postreplication gaps. Binds DNA at Holliday junctions. May be involved in the correct segregation of nucleoids. Has ATPase activity, binds DNA non-sequence specifically; the presence of DNA does not change the ATPase activity. Mutations in this gene cause an increase in RecA-independent precise excision of transposons and insertion elements, and also reduce bacteriophage Mu growth. Genetic interactions among priB, dam, lexA, nagC, polA, rdgB, rdgB, rep and uup link the PriA-PriB replication restart pathway to DNA double-strand break repair. The sequence is that of ATP-binding protein Uup from Escherichia coli (strain K12).